The following is a 542-amino-acid chain: Peptide chain release factor 3 (542 aa).

The tr-type G domain maps to 11–279 (EKRRTFAIIS…AYVEYAPSPR (269 aa)). GTP-binding positions include 20 to 27 (SHPDAGKT), 88 to 92 (DTPGH), and 142 to 145 (NKLD).

It belongs to the TRAFAC class translation factor GTPase superfamily. Classic translation factor GTPase family. PrfC subfamily.

It is found in the cytoplasm. Increases the formation of ribosomal termination complexes and stimulates activities of RF-1 and RF-2. It binds guanine nucleotides and has strong preference for UGA stop codons. It may interact directly with the ribosome. The stimulation of RF-1 and RF-2 is significantly reduced by GTP and GDP, but not by GMP. This Nitrosococcus oceani (strain ATCC 19707 / BCRC 17464 / JCM 30415 / NCIMB 11848 / C-107) protein is Peptide chain release factor 3.